We begin with the raw amino-acid sequence, 388 residues long: UPF0229 protein BH1031 (388 aa).

The segment at 80–117 (HVGQGDGDSQVGDVIARDPSAGQQGPGKGQGAGDQPGE) is disordered. Residues 103–113 (QGPGKGQGAGD) show a composition bias toward gly residues.

This sequence belongs to the UPF0229 family.

The chain is UPF0229 protein BH1031 from Halalkalibacterium halodurans (strain ATCC BAA-125 / DSM 18197 / FERM 7344 / JCM 9153 / C-125) (Bacillus halodurans).